The primary structure comprises 451 residues: Glucose-6-phosphate isomerase (451 aa).

Phosphothreonine is present on T38. E290 functions as the Proton donor in the catalytic mechanism. Catalysis depends on residues H311 and K425.

Belongs to the GPI family.

It localises to the cytoplasm. It carries out the reaction alpha-D-glucose 6-phosphate = beta-D-fructose 6-phosphate. It functions in the pathway carbohydrate biosynthesis; gluconeogenesis. Its pathway is carbohydrate degradation; glycolysis; D-glyceraldehyde 3-phosphate and glycerone phosphate from D-glucose: step 2/4. In terms of biological role, catalyzes the reversible isomerization of glucose-6-phosphate to fructose-6-phosphate. The chain is Glucose-6-phosphate isomerase from Shouchella clausii (strain KSM-K16) (Alkalihalobacillus clausii).